The chain runs to 299 residues: Recombination-associated protein RdgC (299 aa).

Belongs to the RdgC family.

It is found in the cytoplasm. The protein resides in the nucleoid. Functionally, may be involved in recombination. In Cupriavidus pinatubonensis (strain JMP 134 / LMG 1197) (Cupriavidus necator (strain JMP 134)), this protein is Recombination-associated protein RdgC.